A 369-amino-acid chain; its full sequence is Tryptophan 2,3-dioxygenase 2 (369 aa).

Residues 36–40 (FIVVH) and Arg107 each bind substrate. His303 lines the heme pocket. Thr317 is a substrate binding site.

This sequence belongs to the tryptophan 2,3-dioxygenase family. Homotetramer. Requires heme as cofactor.

The catalysed reaction is L-tryptophan + O2 = N-formyl-L-kynurenine. It participates in amino-acid degradation; L-tryptophan degradation via kynurenine pathway; L-kynurenine from L-tryptophan: step 1/2. Functionally, heme-dependent dioxygenase that catalyzes the oxidative cleavage of the L-tryptophan (L-Trp) pyrrole ring and converts L-tryptophan to N-formyl-L-kynurenine. Catalyzes the oxidative cleavage of the indole moiety. The chain is Tryptophan 2,3-dioxygenase 2 from Ralstonia nicotianae (strain ATCC BAA-1114 / GMI1000) (Ralstonia solanacearum).